The sequence spans 271 residues: MQPMLNIALRAARSAGELIFRSIERLDVISVNEKDAKDYVTEVDRAAEQTIVAALRKAYPTHAIMGEEGGFIEGSGEGADYLWVIDPLDGTTNFIHGVPHFAVSIACKYKGRLEHAVVLDPVRQEEFTASRGRGAALNGRRLRVSGRKSLEGALLGTGFPFRDNQIDNLDNYLNMFRSLVGQTAGIRRAGAASLDLAYVAAGRYDAFWEFGLSEWDMAAGALLVQEAGGLVSDFTGSHEFLEKGHIVAGNTKCFKALLTTIQPHLPPSLKR.

Residues E67, D86, and L88 each contribute to the Mg(2+) site. E67 contacts substrate. Substrate is bound by residues 88-91, R187, and D216; that span reads LDGT.

Belongs to the inositol monophosphatase superfamily. In terms of assembly, homodimer. The rRNA transcription and antitermination complex (rrnTAC) consists of RNA polymerase (RNAP), NusA, NusB, NusE (rpsJ), NusG, SubB, ribosomal protein S4, DNA and precursor rRNA; S4 is more flexible than other subunits. Interacts with the ribosome and with RNA polymerase. It depends on Mg(2+) as a cofactor.

The protein localises to the cytoplasm. It catalyses the reaction a myo-inositol phosphate + H2O = myo-inositol + phosphate. Functionally, part of the processive rRNA transcription and antitermination complex (rrnTAC). The complex forms an RNA-chaperone ring around the RNA exit tunnel of RNA polymerase (RNAP). It supports rapid transcription and antitermination of rRNA operons, cotranscriptional rRNA folding, and annealing of distal rRNA regions to allow correct ribosome biogenesis. This subunit may play a central role in organizing the structure. Its function is as follows. A ribosome-associated protein, deletion of which alters the expression of 494 genes, suggesting a role in global gene regulation. Involved in control of pathogenesis-related genes. Required for the activation of virulence factors associated with acute infections (type 3 secretion system, T3SS) while suppressing virulence factors associated with chronic infections (biofilm formation and type 6 secretion system, T6SS). It probably acts at a post-transcriptional level. In Pseudomonas aeruginosa (strain ATCC 15692 / DSM 22644 / CIP 104116 / JCM 14847 / LMG 12228 / 1C / PRS 101 / PAO1), this protein is Nus factor SuhB.